The chain runs to 292 residues: uncharacterized protein (292 aa).

An N-terminal signal peptide occupies residues 1-19 (MFKKYIFILLLLVTSIVKA). The interval 271-292 (KRNNPPLKTNNAKSKNPYDQSK) is disordered.

This is an uncharacterized protein from Rickettsia bellii (strain RML369-C).